We begin with the raw amino-acid sequence, 498 residues long: Lysine--tRNA ligase (498 aa).

Residues glutamate 409 and glutamate 416 each contribute to the Mg(2+) site.

Belongs to the class-II aminoacyl-tRNA synthetase family. Homodimer. Requires Mg(2+) as cofactor.

The protein resides in the cytoplasm. The enzyme catalyses tRNA(Lys) + L-lysine + ATP = L-lysyl-tRNA(Lys) + AMP + diphosphate. The protein is Lysine--tRNA ligase of Coxiella burnetii (strain CbuK_Q154) (Coxiella burnetii (strain Q154)).